Consider the following 471-residue polypeptide: Adenosylhomocysteinase (471 aa).

Substrate is bound by residues T60, D135, and E196. Residue 197 to 199 (TTT) coordinates NAD(+). Residues K226 and D230 each contribute to the substrate site. NAD(+) is bound by residues N231, 260–265 (GYGDVG), E283, N318, 339–341 (IGH), and N387.

Belongs to the adenosylhomocysteinase family. NAD(+) is required as a cofactor.

It is found in the cytoplasm. The catalysed reaction is S-adenosyl-L-homocysteine + H2O = L-homocysteine + adenosine. Its pathway is amino-acid biosynthesis; L-homocysteine biosynthesis; L-homocysteine from S-adenosyl-L-homocysteine: step 1/1. Functionally, may play a key role in the regulation of the intracellular concentration of adenosylhomocysteine. In Chlorobaculum parvum (strain DSM 263 / NCIMB 8327) (Chlorobium vibrioforme subsp. thiosulfatophilum), this protein is Adenosylhomocysteinase.